A 402-amino-acid chain; its full sequence is Tryptophan synthase beta chain (402 aa).

Lysine 91 bears the N6-(pyridoxal phosphate)lysine mark.

Belongs to the TrpB family. Tetramer of two alpha and two beta chains. Pyridoxal 5'-phosphate is required as a cofactor.

It carries out the reaction (1S,2R)-1-C-(indol-3-yl)glycerol 3-phosphate + L-serine = D-glyceraldehyde 3-phosphate + L-tryptophan + H2O. Its pathway is amino-acid biosynthesis; L-tryptophan biosynthesis; L-tryptophan from chorismate: step 5/5. In terms of biological role, the beta subunit is responsible for the synthesis of L-tryptophan from indole and L-serine. In Streptococcus thermophilus (strain ATCC BAA-250 / LMG 18311), this protein is Tryptophan synthase beta chain.